A 196-amino-acid polypeptide reads, in one-letter code: Small ribosomal subunit protein uS4c (196 aa).

The segment at 17-36 (ALPGLTRKTPKSGSNLKKKF) is disordered. The S4 RNA-binding domain occupies 89-169 (MRLDNILFRL…LPKHLTIDTL (81 aa)).

It belongs to the universal ribosomal protein uS4 family. Part of the 30S ribosomal subunit. Contacts protein S5. The interaction surface between S4 and S5 is involved in control of translational fidelity.

Its subcellular location is the plastid. It localises to the chloroplast. One of the primary rRNA binding proteins, it binds directly to 16S rRNA where it nucleates assembly of the body of the 30S subunit. Functionally, with S5 and S12 plays an important role in translational accuracy. The chain is Small ribosomal subunit protein uS4c (rps4) from Festuca gigantea (Giant fescue).